A 223-amino-acid chain; its full sequence is MGDNSAAAAAVAAPRGRFGRICVFCGSNAGNRAVFGDAALQLGQELVSRGIELVYGGGSVGLMGLIAQTVLDGGCGVLGVIPKALMPTEISGASVGEVKIVSDMHERKAEMARQSDAFIALPGGYGTMEELLEMITWSQLGIHDKPVGLLNVDGYYDPLLALFDKGAAEGFIKADCRQIIVSAPTAHELLRKMEQYTRSHQEVAPRTSWEMSELGYGKTPEES.

Substrate contacts are provided by residues E89, 107–108 (RK), 124–130 (GYGTMEE), and T136. The segment at 201-223 (QEVAPRTSWEMSELGYGKTPEES) is disordered.

It belongs to the LOG family. As to expression, expressed in shoot apex, immature inflorescences and flowers.

It carries out the reaction N(6)-(dimethylallyl)adenosine 5'-phosphate + H2O = N(6)-dimethylallyladenine + D-ribose 5-phosphate. It catalyses the reaction 9-ribosyl-trans-zeatin 5'-phosphate + H2O = trans-zeatin + D-ribose 5-phosphate. Functionally, cytokinin-activating enzyme working in the direct activation pathway. Phosphoribohydrolase that converts inactive cytokinin nucleotides to the biologically active free-base forms. This is Probable cytokinin riboside 5'-monophosphate phosphoribohydrolase LOGL1 (LOGL1) from Oryza sativa subsp. japonica (Rice).